Here is a 227-residue protein sequence, read N- to C-terminus: UMP-CMP kinase (227 aa).

Residue 35–40 coordinates ATP; it reads GAGKGT. The NMP stretch occupies residues 55–85; that stretch reads SAGDLLRAEQHREGSEYGQLIQTCIKEGSIV. A ribonucleoside 5'-phosphate-binding positions include R61, 83 to 85, 122 to 125, and Q129; these read SIV and GFPR. The LID stretch occupies residues 159–169; it reads ERGKTSGREDD. Position 160 (R160) interacts with ATP. A ribonucleoside 5'-phosphate contacts are provided by R166 and R177. Residue V205 coordinates ATP.

It belongs to the adenylate kinase family. UMP-CMP kinase subfamily. In terms of assembly, monomer. Mg(2+) is required as a cofactor.

It is found in the cytoplasm. The protein localises to the nucleus. The catalysed reaction is UMP + ATP = UDP + ADP. Catalyzes the phosphorylation of pyrimidine nucleoside monophosphates at the expense of ATP. Plays an important role in de novo pyrimidine nucleotide biosynthesis. Has preference for UMP and CMP as phosphate acceptors, but can also use AMP and dCMP to a lesser extent. May play a role during the formation of basidiospores in the gill tissue. This Lentinula edodes (Shiitake mushroom) protein is UMP-CMP kinase (uck1).